Reading from the N-terminus, the 506-residue chain is Maturase K (506 aa).

This sequence belongs to the intron maturase 2 family. MatK subfamily.

The protein resides in the plastid. The protein localises to the chloroplast. Its function is as follows. Usually encoded in the trnK tRNA gene intron. Probably assists in splicing its own and other chloroplast group II introns. The sequence is that of Maturase K from Trifolium spumosum (Mediterranean clover).